A 666-amino-acid chain; its full sequence is ATP-dependent RNA helicase DDX51 (666 aa).

An N-acetylalanine modification is found at Ala2. Residues 9 to 152 (YPGPDAAAAA…AAPDGPALEE (144 aa)) form a disordered region. The span at 10 to 28 (PGPDAAAAAGPEGAEAGAH) shows a compositional bias: low complexity. Residues 33–48 (ALLERLQSRARERQQQ) show a composition bias toward basic and acidic residues. The segment covering 49-58 (REPAQTEAAA) has biased composition (low complexity). The segment covering 65-75 (RRRRRPRRRRR) has biased composition (basic residues). 2 positions are modified to phosphoserine: Ser83 and Ser103. Residues 97-108 (EDAGAESNEEAP) are compositionally biased toward acidic residues. The Q motif signature appears at 221-229 (YFPVQAAVI). A Helicase ATP-binding domain is found at 243–452 (GRGGYRPSDL…QLGLHQPRLF (210 aa)). 256–263 (APTGSGKT) contacts ATP. Residues 371 to 374 (DEAD) carry the DEAD box motif. Residues 494–640 (VVLHLVLEMG…RHELSSKLLQ (147 aa)) enclose the Helicase C-terminal domain.

It belongs to the DEAD box helicase family. DDX51/DBP6 subfamily.

The protein localises to the nucleus. It is found in the nucleolus. The catalysed reaction is ATP + H2O = ADP + phosphate + H(+). Its function is as follows. ATP-binding RNA helicase involved in the biogenesis of 60S ribosomal subunits. The protein is ATP-dependent RNA helicase DDX51 (DDX51) of Homo sapiens (Human).